Consider the following 1040-residue polypeptide: Exosome RNA helicase MTR4 (1040 aa).

N-acetylalanine is present on Ala2. The tract at residues 16 to 77 (DSTSAAGAKK…GTDEPIFGKK (62 aa)) is disordered. A compositionally biased stretch (basic and acidic residues) spans 23–33 (AKKDKEKEKWK). Residue Lys24 forms a Glycyl lysine isopeptide (Lys-Gly) (interchain with G-Cter in SUMO2) linkage. The residue at position 38 (Ser38) is a Phosphoserine. Residues 41–50 (KAGKRLDTKL) show a composition bias toward basic and acidic residues. An N6-acetyllysine mark is found at Lys49 and Lys76. ATP contacts are provided by residues Ile137, 159–166 (AHTSAGKT), Ser162, Gly164, Lys165, and Thr166. The 157-residue stretch at 146–302 (IQCVDNNQSV…WICHLHKQPC (157 aa)) folds into the Helicase ATP-binding domain. Residues 250–253 (DEIH) carry the DEIH box motif. Lys356 participates in a covalent cross-link: Glycyl lysine isopeptide (Lys-Gly) (interchain with G-Cter in SUMO2). A Helicase C-terminal domain is found at 403 to 575 (QMTKLDFNTD…NMVLNLLRVE (173 aa)). Residues Lys682 and Lys721 each participate in a glycyl lysine isopeptide (Lys-Gly) (interchain with G-Cter in SUMO2) cross-link.

The protein belongs to the helicase family. SKI2 subfamily. In terms of assembly, component of a TRAMP-like complex, an ATP-dependent exosome regulatory complex consisting of a helicase (MTREX), an oligadenylate polymerase (TENT4B or TENT4A), and a substrate specific RNA-binding factor (ZCCHC7 or ZCCHC8). Several TRAMP-like complexes exist with specific compositions and are associated with nuclear, or nucleolar RNA exosomes. Identified in the spliceosome C complex. Component of the poly(A) tail exosome targeting (PAXT) complex made of PABPN1, ZFC3H1 and MTREX that directs a subset of long and polyadenylated poly(A) RNAs for exosomal degradation. Component of the nuclear exosome targeting (NEXT) complex composed of MTREX, ZCCHC8, and RBM7 that directs a subset of non-coding short-lived RNAs for exosomal degradation. Interacts with ZCCHC8; this interaction bridges the interaction between RBM7 and MTREX. Binds to ZFC3H1 and RBM7 in a RNase-insensitive manner. Interacts with EXOSC10; the interaction mediates the association of MTREX with nuclear RNA exosomes. Interacts with isoform 1 of NVL in an ATP-dependent manner; the interaction is required to associate NVL with nuclear RNA exosome. Interacts with WDR74; the interaction dissociation in a late stage of rRNA synthesis is required for appropriate maturation of pre-60S particles and depends on the ATPase activity of NVL. Interacts with MPHOSPH6. Interacts with the RNA cap-binding complex proteins NCBP1 and SRRT. Interacts with NRDE2; the interaction is direct and negatively regulates MTREX function in exosomal degradation by changing its conformation precluding interaction with ZFC3H1, the RNA cap-binding complex proteins NCBP1 and SRRT, and association with the exosome. Associates with the RNA exosome complex.

The protein localises to the nucleus. Its subcellular location is the nucleoplasm. It localises to the nucleolus. The protein resides in the nucleus speckle. It catalyses the reaction ATP + H2O = ADP + phosphate + H(+). Its activity is regulated as follows. Activated when MTREX is incorporated into NEXT complex an the nuclear RNA exosome complex. Its function is as follows. Catalyzes the ATP-dependent unwinding of RNA duplexes with a single-stranded 3' RNA extension. Central subunit of many protein complexes, namely TRAMP-like, nuclear exosome targeting (NEXT) and poly(A) tail exosome targeting (PAXT). NEXT functions as an RNA exosome cofactor that directs a subset of non-coding short-lived RNAs for exosomal degradation. NEXT is involved in surveillance and turnover of aberrant transcripts and non-coding RNAs. PAXT directs a subset of long and polyadenylated poly(A) RNAs for exosomal degradation. The RNA exosome is fundamental for the degradation of RNA in eukaryotic nuclei. Substrate targeting is facilitated by its cofactor ZCCHC8, which links to RNA-binding protein adapters. Associated with the RNA exosome complex and involved in the 3'-processing of the 7S pre-RNA to the mature 5.8S rRNA. May be involved in pre-mRNA splicing. In the context of NEXT complex can also in vitro unwind DNA:RNA heteroduplexes with a 3' poly (A) RNA tracking strand. Can promote unwinding and degradation of structured RNA substrates when associated with the nuclear exosome and its cofactors. Can displace a DNA strand while translocating on RNA to ultimately degrade the RNA within a DNA/RNA heteroduplex. Plays a role in DNA damage response. The chain is Exosome RNA helicase MTR4 from Mus musculus (Mouse).